Consider the following 682-residue polypeptide: DNA ligase (682 aa).

NAD(+) contacts are provided by residues 42 to 46, 88 to 89, and glutamate 121; these read DAAYD and SL. Catalysis depends on lysine 123, which acts as the N6-AMP-lysine intermediate. Residues arginine 144, glutamate 180, lysine 291, and lysine 315 each coordinate NAD(+). The Zn(2+) site is built by cysteine 409, cysteine 412, cysteine 427, and cysteine 433. Positions 601-682 constitute a BRCT domain; sequence AAGGALAGKT…FRSLAGLPPG (82 aa).

Belongs to the NAD-dependent DNA ligase family. LigA subfamily. It depends on Mg(2+) as a cofactor. The cofactor is Mn(2+).

The catalysed reaction is NAD(+) + (deoxyribonucleotide)n-3'-hydroxyl + 5'-phospho-(deoxyribonucleotide)m = (deoxyribonucleotide)n+m + AMP + beta-nicotinamide D-nucleotide.. Functionally, DNA ligase that catalyzes the formation of phosphodiester linkages between 5'-phosphoryl and 3'-hydroxyl groups in double-stranded DNA using NAD as a coenzyme and as the energy source for the reaction. It is essential for DNA replication and repair of damaged DNA. The chain is DNA ligase from Acidiphilium cryptum (strain JF-5).